The following is a 229-amino-acid chain: Mannose-specific lectin TAR1 (229 aa).

Positions 1-23 are cleaved as a signal peptide; it reads MAKLLLFLLPAILGLLIPRSAVA. Bulb-type lectin domains follow at residues 26 to 131 and 145 to 229; these read TNYL…PWVP and DNLL…DYVL. Beta-D-mannose contacts are provided by residues 51–55, Tyr59, Trp63, Gln64, 170–174, Tyr178, and 182–185; these read QNDCN, QGDCN, and YGWQ. Residues 51–59 carry the Carbohydrate-binding motif 1 motif; that stretch reads QNDCNLVLY. 2 disulfide bridges follow: Cys54/Cys74 and Cys173/Cys195. The Carbohydrate-binding motif 2 signature appears at 170-178; that stretch reads QGDCNLVLY.

In terms of assembly, forms heterotetramer of 2 chains 1 and 2 chains 2 arranged as a dimer of chain 1 and chain 2 heterodimers.

The protein resides in the secreted. Functionally, mannose-specific lectin. Shows agglutinating activity towards erythrocytes from rabbit. The sequence is that of Mannose-specific lectin TAR1 from Colocasia esculenta (Wild taro).